The sequence spans 82 residues: RNA-binding protein Hfq (82 aa).

A Sm domain is found at 10–69 (DPFLNALRREHVPVSIYLVNGIKLQGQIESFDQYVVLLRNTVTQMVYKHAISTIVPGRAV).

It belongs to the Hfq family. In terms of assembly, homohexamer.

Its function is as follows. RNA chaperone that binds small regulatory RNA (sRNAs) and mRNAs to facilitate mRNA translational regulation in response to envelope stress, environmental stress and changes in metabolite concentrations. Also binds with high specificity to tRNAs. The polypeptide is RNA-binding protein Hfq (Albidiferax ferrireducens (strain ATCC BAA-621 / DSM 15236 / T118) (Rhodoferax ferrireducens)).